The chain runs to 284 residues: Ribose-5-phosphate isomerase (284 aa).

This sequence belongs to the ribose 5-phosphate isomerase family.

It localises to the cytoplasm. It carries out the reaction aldehydo-D-ribose 5-phosphate = D-ribulose 5-phosphate. It participates in carbohydrate degradation; pentose phosphate pathway; D-ribose 5-phosphate from D-ribulose 5-phosphate (non-oxidative stage): step 1/1. The polypeptide is Ribose-5-phosphate isomerase (RKI1) (Lodderomyces elongisporus (strain ATCC 11503 / CBS 2605 / JCM 1781 / NBRC 1676 / NRRL YB-4239) (Yeast)).